A 225-amino-acid polypeptide reads, in one-letter code: Uridylate kinase (225 aa).

Residue 9-10 (GS) coordinates ATP. Glycine 46 is a UMP binding site. Glycine 47 and arginine 51 together coordinate ATP. Residues aspartate 67 and 115–121 (THPAHTT) each bind UMP. Threonine 141, asparagine 142, tyrosine 147, and aspartate 150 together coordinate ATP.

Belongs to the UMP kinase family. Homohexamer.

The protein localises to the cytoplasm. It carries out the reaction UMP + ATP = UDP + ADP. It functions in the pathway pyrimidine metabolism; CTP biosynthesis via de novo pathway; UDP from UMP (UMPK route): step 1/1. Inhibited by UTP. Catalyzes the reversible phosphorylation of UMP to UDP. The polypeptide is Uridylate kinase (Methanococcus maripaludis (strain C7 / ATCC BAA-1331)).